The primary structure comprises 460 residues: A-type ATP synthase subunit B (460 aa).

This sequence belongs to the ATPase alpha/beta chains family. In terms of assembly, has multiple subunits with at least A(3), B(3), C, D, E, F, H, I and proteolipid K(x).

The protein localises to the cell membrane. Component of the A-type ATP synthase that produces ATP from ADP in the presence of a proton gradient across the membrane. The B chain is a regulatory subunit. The protein is A-type ATP synthase subunit B of Methanosarcina acetivorans (strain ATCC 35395 / DSM 2834 / JCM 12185 / C2A).